We begin with the raw amino-acid sequence, 289 residues long: Phosphatidylserine decarboxylase proenzyme (289 aa).

Residues D89, H146, and S252 each act as charge relay system; for autoendoproteolytic cleavage activity in the active site. The active-site Schiff-base intermediate with substrate; via pyruvic acid; for decarboxylase activity is S252. S252 bears the Pyruvic acid (Ser); by autocatalysis mark.

This sequence belongs to the phosphatidylserine decarboxylase family. PSD-B subfamily. Prokaryotic type I sub-subfamily. Heterodimer of a large membrane-associated beta subunit and a small pyruvoyl-containing alpha subunit. Pyruvate is required as a cofactor. Is synthesized initially as an inactive proenzyme. Formation of the active enzyme involves a self-maturation process in which the active site pyruvoyl group is generated from an internal serine residue via an autocatalytic post-translational modification. Two non-identical subunits are generated from the proenzyme in this reaction, and the pyruvate is formed at the N-terminus of the alpha chain, which is derived from the carboxyl end of the proenzyme. The autoendoproteolytic cleavage occurs by a canonical serine protease mechanism, in which the side chain hydroxyl group of the serine supplies its oxygen atom to form the C-terminus of the beta chain, while the remainder of the serine residue undergoes an oxidative deamination to produce ammonia and the pyruvoyl prosthetic group on the alpha chain. During this reaction, the Ser that is part of the protease active site of the proenzyme becomes the pyruvoyl prosthetic group, which constitutes an essential element of the active site of the mature decarboxylase.

It is found in the cell membrane. It catalyses the reaction a 1,2-diacyl-sn-glycero-3-phospho-L-serine + H(+) = a 1,2-diacyl-sn-glycero-3-phosphoethanolamine + CO2. It functions in the pathway phospholipid metabolism; phosphatidylethanolamine biosynthesis; phosphatidylethanolamine from CDP-diacylglycerol: step 2/2. Functionally, catalyzes the formation of phosphatidylethanolamine (PtdEtn) from phosphatidylserine (PtdSer). The polypeptide is Phosphatidylserine decarboxylase proenzyme (Shewanella denitrificans (strain OS217 / ATCC BAA-1090 / DSM 15013)).